Reading from the N-terminus, the 217-residue chain is ATP-dependent Clp protease proteolytic subunit (217 aa).

The active-site Nucleophile is S120. The active site involves H145.

This sequence belongs to the peptidase S14 family. Fourteen ClpP subunits assemble into 2 heptameric rings which stack back to back to give a disk-like structure with a central cavity, resembling the structure of eukaryotic proteasomes.

It is found in the cytoplasm. It carries out the reaction Hydrolysis of proteins to small peptides in the presence of ATP and magnesium. alpha-casein is the usual test substrate. In the absence of ATP, only oligopeptides shorter than five residues are hydrolyzed (such as succinyl-Leu-Tyr-|-NHMec, and Leu-Tyr-Leu-|-Tyr-Trp, in which cleavage of the -Tyr-|-Leu- and -Tyr-|-Trp bonds also occurs).. In terms of biological role, cleaves peptides in various proteins in a process that requires ATP hydrolysis. Has a chymotrypsin-like activity. Plays a major role in the degradation of misfolded proteins. This is ATP-dependent Clp protease proteolytic subunit from Ralstonia nicotianae (strain ATCC BAA-1114 / GMI1000) (Ralstonia solanacearum).